Consider the following 343-residue polypeptide: Zinc finger protein STP3 (343 aa).

Disordered stretches follow at residues 31 to 56 and 71 to 140; these read YNGE…SGSA and SNDV…KPRK. The span at 33-45 shows a compositional bias: polar residues; that stretch reads GEASSASTHPTLP. 3 stretches are compositionally biased toward low complexity: residues 46 to 56, 71 to 86, and 94 to 120; these read NMNISNGSGSA, SNDV…FLPS, and SASA…AGPS. A phosphoserine mark is found at Ser-71 and Ser-111. Residues 169 to 191 form a C2H2-type zinc finger; sequence HKCPICHRGFARNNDLLRHKKRH. A disordered region spans residues 198–222; sequence SQSGVLSNHNDGKGGSVSPNDDDTH.

The protein localises to the nucleus. In Saccharomyces cerevisiae (strain ATCC 204508 / S288c) (Baker's yeast), this protein is Zinc finger protein STP3 (STP3).